Reading from the N-terminus, the 131-residue chain is Small ribosomal subunit protein uS8 (131 aa).

The protein belongs to the universal ribosomal protein uS8 family. Part of the 30S ribosomal subunit. Contacts proteins S5 and S12.

In terms of biological role, one of the primary rRNA binding proteins, it binds directly to 16S rRNA central domain where it helps coordinate assembly of the platform of the 30S subunit. This is Small ribosomal subunit protein uS8 from Erythrobacter litoralis (strain HTCC2594).